The chain runs to 119 residues: MQAKAILRHTPTSPRKMRLVAGLVRGKQVDLAKAILLNSTKSASRNVMMTLKSAVSNYALINPDERVSDQELFIKAVYVDQGATLKRTLPAPMGRAFRIRKRSNHLTIIVDKVKNPVTK.

The protein belongs to the universal ribosomal protein uL22 family. In terms of assembly, part of the 50S ribosomal subunit.

Its function is as follows. This protein binds specifically to 23S rRNA; its binding is stimulated by other ribosomal proteins, e.g. L4, L17, and L20. It is important during the early stages of 50S assembly. It makes multiple contacts with different domains of the 23S rRNA in the assembled 50S subunit and ribosome. In terms of biological role, the globular domain of the protein is located near the polypeptide exit tunnel on the outside of the subunit, while an extended beta-hairpin is found that lines the wall of the exit tunnel in the center of the 70S ribosome. The chain is Large ribosomal subunit protein uL22 from Chlorobium phaeobacteroides (strain DSM 266 / SMG 266 / 2430).